The following is a 556-amino-acid chain: Cell wall integrity and stress response component 3 (556 aa).

The signal sequence occupies residues 1 to 38 (MERVWFAKLTNKGTIKIGYISFILLSLLCQSLIGLVNA). Residues 39–132 (DFNYEGCYSA…SSYMNVYVNA (94 aa)) form the WSC domain. Over 39 to 384 (DFNYEGCYSA…QRLSGGAIAG (346 aa)) the chain is Extracellular. A glycan (N-linked (GlcNAc...) asparagine) is linked at asparagine 84. 2 stretches are compositionally biased toward low complexity: residues 142–169 (SSSK…SSTT) and 184–257 (TTVS…STTS). Disordered regions lie at residues 142 to 257 (SSSK…STTS) and 269 to 312 (TLSS…PSTS). N-linked (GlcNAc...) asparagine glycans are attached at residues asparagine 367 and asparagine 370. The helical transmembrane segment at 385-405 (IVIGVVFGVIFIILILLFLIW) threads the bilayer. At 406 to 556 (RRRKSHDQLD…LSSTVSHNRA (151 aa)) the chain is on the cytoplasmic side. Disordered regions lie at residues 425-444 (YSFG…SGTT) and 534-556 (LQVV…HNRA). Over residues 546–556 (ELSSTVSHNRA) the composition is skewed to polar residues.

The protein resides in the membrane. This Saccharomyces cerevisiae (strain ATCC 204508 / S288c) (Baker's yeast) protein is Cell wall integrity and stress response component 3 (WSC3).